A 72-amino-acid chain; its full sequence is Translation initiation factor IF-1 (72 aa).

The S1-like domain occupies 1–72 (MAKEDVIEVE…NRGRIIYRFK (72 aa)).

This sequence belongs to the IF-1 family. As to quaternary structure, component of the 30S ribosomal translation pre-initiation complex which assembles on the 30S ribosome in the order IF-2 and IF-3, IF-1 and N-formylmethionyl-tRNA(fMet); mRNA recruitment can occur at any time during PIC assembly.

It localises to the cytoplasm. Functionally, one of the essential components for the initiation of protein synthesis. Stabilizes the binding of IF-2 and IF-3 on the 30S subunit to which N-formylmethionyl-tRNA(fMet) subsequently binds. Helps modulate mRNA selection, yielding the 30S pre-initiation complex (PIC). Upon addition of the 50S ribosomal subunit IF-1, IF-2 and IF-3 are released leaving the mature 70S translation initiation complex. The chain is Translation initiation factor IF-1 from Syntrophomonas wolfei subsp. wolfei (strain DSM 2245B / Goettingen).